The primary structure comprises 626 residues: Chaperone protein HtpG (626 aa).

Positions 1–339 are a; substrate-binding; sequence MSQNQETRGF…SNDLPLNVSR (339 aa). The b stretch occupies residues 340 to 555; the sequence is EILQDNKITA…NDQMTTQMAK (216 aa). Positions 556 to 626 are c; the sequence is LFAAAGQPVP…FIKRINKLLG (71 aa).

This sequence belongs to the heat shock protein 90 family. In terms of assembly, homodimer.

Its subcellular location is the cytoplasm. In terms of biological role, molecular chaperone. Has ATPase activity. The chain is Chaperone protein HtpG from Haemophilus influenzae (strain 86-028NP).